We begin with the raw amino-acid sequence, 348 residues long: Chemokine C-C motif receptor-like 2 (348 aa).

Over 1 to 43 (MANYTPAPEDDYDVFIEDDLSDDEIEPCTPYDPKILSAQLVPY) the chain is Extracellular. The chain crosses the membrane as a helical span at residues 44-64 (LYTTVFMVGLLDNILVVFILV). The Cytoplasmic segment spans residues 65 to 76 (KYKGLRQAENMS). Residues 77–97 (FLNLALSNLGFLLTLPFWAYA) traverse the membrane as a helical segment. The Extracellular portion of the chain corresponds to 98 to 110 (ASHGEGFDDPLCK). C109 and C187 form a disulfide bridge. The helical transmembrane segment at 111-131 (ILLLLYSIGLYSEAFFNVLLT) threads the bilayer. The Cytoplasmic segment spans residues 132–150 (VQRYKEFFHVRRRFSACRT). Residues 151 to 171 (VAGSIFISVLVWVTATLVTLP) traverse the membrane as a helical segment. Topologically, residues 172-204 (ELVSYKPQMQSQKYKCFFTGLHFLPADETFWKH) are extracellular. A helical membrane pass occupies residues 205-225 (FLTLKMNILGFLLPLFAFVYC). The Cytoplasmic segment spans residues 226–244 (YVRMRKTLQFRERNYGLFK). A helical membrane pass occupies residues 245-265 (LVFTIMAVFLLMWGPYNIVLF). At 266-292 (LSAFNEHFSLHGCGSSYNLNKSVQITR) the chain is on the extracellular side. N285 is a glycosylation site (N-linked (GlcNAc...) asparagine). Residues 293 to 313 (IIAATHCCVNPLLYVFLDKAF) form a helical membrane-spanning segment. Residues 314–348 (RKHLCHLFYLCSDTAPQPTEEPAQGASGEEYHLSS) lie on the Cytoplasmic side of the membrane.

The protein belongs to the G-protein coupled receptor 1 family.

The protein resides in the cell membrane. Its function is as follows. Receptor for CCL19 and chemerin/RARRES2. Does not appear to be a signaling receptor, but may have a role in modulating chemokine-triggered immune responses by capturing and internalizing CCL19 or by presenting RARRES2 ligand to CMKLR1, a functional signaling receptor. Plays a critical role for the development of Th2 responses. This chain is Chemokine C-C motif receptor-like 2 (CCRL2), found in Bos taurus (Bovine).